The sequence spans 579 residues: Maintenance of mitochondrial morphology protein 1 (579 aa).

At methionine 1–glycine 43 the chain is on the lumenal side. A helical transmembrane segment spans residues leucine 44–phenylalanine 64. At glutamate 65–glutamine 579 the chain is on the cytoplasmic side. The SMP-LTD domain occupies leucine 150–proline 391. Disordered regions lie at residues valine 309–histidine 332, arginine 460–arginine 479, and serine 558–glutamine 579. 2 stretches are compositionally biased toward low complexity: residues proline 311–proline 328 and serine 465–serine 476.

It belongs to the MMM1 family. In terms of assembly, homodimer. Component of the ER-mitochondria encounter structure (ERMES) or MDM complex, composed of MMM1, MDM10, MDM12 and MDM34. An MMM1 homodimer associates with one molecule of MDM12 on each side in a pairwise head-to-tail manner, and the SMP-LTD domains of MMM1 and MDM12 generate a continuous hydrophobic tunnel for phospholipid trafficking.

The protein localises to the endoplasmic reticulum membrane. Component of the ERMES/MDM complex, which serves as a molecular tether to connect the endoplasmic reticulum (ER) and mitochondria. Components of this complex are involved in the control of mitochondrial shape and protein biogenesis, and function in nonvesicular lipid trafficking between the ER and mitochondria. The MDM12-MMM1 subcomplex functions in the major beta-barrel assembly pathway that is responsible for biogenesis of all outer membrane beta-barrel proteins, and acts in a late step after the SAM complex. The MDM10-MDM12-MMM1 subcomplex further acts in the TOM40-specific pathway after the action of the MDM12-MMM1 complex. Essential for establishing and maintaining the structure of mitochondria and maintenance of mtDNA nucleoids. The protein is Maintenance of mitochondrial morphology protein 1 of Mycosarcoma maydis (Corn smut fungus).